The primary structure comprises 695 residues: UvrABC system protein B (695 aa).

The region spanning 25 to 176 (KSILEGHRFQ…NQREVLRDLA (152 aa)) is the Helicase ATP-binding domain. ATP is bound at residue 38-45 (GATGTGKT). Residues 91 to 114 (YYDYYQPEAYVPSTDTYIAKSSSI) carry the Beta-hairpin motif. The Helicase C-terminal domain maps to 454–617 (LLGEIYLRLE…ITPKPIIKKN (164 aa)). The UVR domain maps to 652–687 (PELIGQLELKMKAAAKNLEFEEAAQLRDQIKKLRQR).

This sequence belongs to the UvrB family. Forms a heterotetramer with UvrA during the search for lesions. Interacts with UvrC in an incision complex.

The protein localises to the cytoplasm. Functionally, the UvrABC repair system catalyzes the recognition and processing of DNA lesions. A damage recognition complex composed of 2 UvrA and 2 UvrB subunits scans DNA for abnormalities. Upon binding of the UvrA(2)B(2) complex to a putative damaged site, the DNA wraps around one UvrB monomer. DNA wrap is dependent on ATP binding by UvrB and probably causes local melting of the DNA helix, facilitating insertion of UvrB beta-hairpin between the DNA strands. Then UvrB probes one DNA strand for the presence of a lesion. If a lesion is found the UvrA subunits dissociate and the UvrB-DNA preincision complex is formed. This complex is subsequently bound by UvrC and the second UvrB is released. If no lesion is found, the DNA wraps around the other UvrB subunit that will check the other stand for damage. This Synechococcus sp. (strain JA-3-3Ab) (Cyanobacteria bacterium Yellowstone A-Prime) protein is UvrABC system protein B.